Consider the following 239-residue polypeptide: Flagellar L-ring protein (239 aa).

The first 16 residues, 1–16 (MKPVILATASALLLAA), serve as a signal peptide directing secretion. Cys17 is lipidated: N-palmitoyl cysteine. A lipid anchor (S-diacylglycerol cysteine) is attached at Cys17. The segment covering 120–138 (SGSTSGSASGNLGLTGDTS) has biased composition (polar residues). A disordered region spans residues 120–145 (SGSTSGSASGNLGLTGDTSTDGKGKI).

It belongs to the FlgH family. The basal body constitutes a major portion of the flagellar organelle and consists of four rings (L,P,S, and M) mounted on a central rod.

Its subcellular location is the cell outer membrane. It localises to the bacterial flagellum basal body. Functionally, assembles around the rod to form the L-ring and probably protects the motor/basal body from shearing forces during rotation. This Azorhizobium caulinodans (strain ATCC 43989 / DSM 5975 / JCM 20966 / LMG 6465 / NBRC 14845 / NCIMB 13405 / ORS 571) protein is Flagellar L-ring protein.